The sequence spans 319 residues: R-phycoerythrin gamma chain, chloroplastic (319 aa).

A chloroplast-targeting transit peptide spans 1-71; the sequence is MDSPAFAVTG…RPKKLASYKR (71 aa). Phycourobilin-binding residues include C96 and C135. C212 contributes to the (2R,3E)-phycoerythrobilin binding site. A phycourobilin-binding site is contributed by C299.

As to quaternary structure, heteromer of 4 alpha, 4 beta and one gamma chains. Post-translationally, contains four covalently linked bilin chromophores.

It is found in the plastid. The protein resides in the chloroplast thylakoid membrane. This Corallina officinalis (Coral seaweed) protein is R-phycoerythrin gamma chain, chloroplastic.